The chain runs to 674 residues: Leucine-rich repeat transmembrane protein FLRT1 (674 aa).

The N-terminal stretch at 1–51 is a signal peptide; sequence MVVAHSAATATTTPAATVTATVVMTTATMDLRDWLFLCYGLIAFLTEVIDS. Topologically, residues 52 to 552 are extracellular; sequence TTCPSVCRCD…QNAGPMAGLP (501 aa). Intrachain disulfides connect Cys54–Cys60 and Cys58–Cys67. The LRRNT domain maps to 54–80; that stretch reads CPSVCRCDNGFIYCNDRGLTSIPSDIP. 10 LRR repeats span residues 81–105, 106–126, 127–149, 151–175, 176–197, 198–220, 222–246, 247–269, 270–292, and 293–316; these read DDATTLYLQNNQINNAGIPQDLKTK, VKVQVIYLYENDLDEFPINLP, RSLRELHLQDNNVRTIARDSLAR, PLLEKLHLDDNSVSTVSIEEDAFAD, SKQLKLLFLSRNHLSSIPSGLP, HTLEELRLDDNRISTIPLHAFKG, NSLRRLVLDGNLLANQRIADDTFSR, LQNLTELSLVRNSLAAPPLNLPS, AHLQKLYLQDNAISHIPYNTLAK, and MRELERLDLSNNNLTTLPRGLFDD. An N-linked (GlcNAc...) asparagine glycan is attached at Asn305. In terms of domain architecture, LRRCT spans 328–379; the sequence is NPWFCGCNLMWLRDWVRARAAVVNVRGLMCQGPEKVRGMAIKDITSEMDECF. Cys332 and Cys357 are oxidised to a cystine. The Fibronectin type-III domain occupies 437-532; that stretch reads KTLVIQVKPL…VCAKAETADS (96 aa). The helical transmembrane segment at 553–573 threads the bilayer; the sequence is LAGIIGGAVALVFLFLVLGAI. The Cytoplasmic portion of the chain corresponds to 574–674; the sequence is CWYVHRAGEL…GIPDVDYSYT (101 aa). 3 positions are modified to phosphotyrosine: Tyr600, Tyr633, and Tyr671.

In terms of assembly, interacts with FGFR1. Interacts (via extracellular domain) with ADGRL1/LPHN1 and ADGRL3 (via olfactomedin-like domain). Post-translationally, phosphorylated in response to FGFR1 signaling, but is not a direct substrate of FGFR1 or SRC. A mutant where the Tyr phosphorylation sites have been replaced by Phe displays constitutive FGFR1-dependent activation of downstream MAP kinases. In terms of processing, N-glycosylated. Proteolytic cleavage in the juxtamembrane region gives rise to a soluble ectodomain. As to expression, detected in brain (at protein level).

The protein resides in the cell membrane. It is found in the endoplasmic reticulum membrane. The protein localises to the cytoplasmic vesicle membrane. It localises to the cytoplasm. Its subcellular location is the perinuclear region. The protein resides in the cell junction. It is found in the focal adhesion. The protein localises to the secreted. It localises to the cell projection. Its subcellular location is the neuron projection. Its function is as follows. Plays a role in fibroblast growth factor-mediated signaling cascades that lead to the activation of MAP kinases. Promotes neurite outgrowth via FGFR1-mediated activation of downstream MAP kinases. Promotes an increase both in neurite number and in neurite length. May play a role in cell-cell adhesion and cell guidance via its interaction with ADGRL1/LPHN1 and ADGRL3. In Mus musculus (Mouse), this protein is Leucine-rich repeat transmembrane protein FLRT1.